The chain runs to 140 residues: Putative pre-16S rRNA nuclease (140 aa).

It belongs to the YqgF nuclease family.

It localises to the cytoplasm. Its function is as follows. Could be a nuclease involved in processing of the 5'-end of pre-16S rRNA. This chain is Putative pre-16S rRNA nuclease, found in Serratia proteamaculans (strain 568).